Consider the following 288-residue polypeptide: MTRATNFTELYAGKGILDTYMVAEKITRYYTQDLIQLSGLSESSLTPLVILDLACGTGVVSDALHDMLNFQPKGNWELTCGDISTELTGHVKQKILERGWENSIAKVVDAQNTELPTGHYTHVFAALAFTSFPDTYAAMKEVMRILQPGGTLTISTWQRTEWLAVVEAAVAIIPADLPFPTTKEFMSCMNPGWDSEDYVHSRFEEAGFHSVQVTTISKQFETSVEDLYKIAQPVIPIIVSKWWNQEQRDKYENDILPALQRHLNETYGENGLVPQEWTAVFATGQKGS.

Residues T57, D82, and 109–110 each bind S-adenosyl-L-methionine; that span reads DA.

This sequence belongs to the class I-like SAM-binding methyltransferase superfamily.

The catalysed reaction is glandicoline B + S-adenosyl-L-methionine = meleagrin + S-adenosyl-L-homocysteine + H(+). It participates in alkaloid biosynthesis. Glandicoline B O-methyltransferase; part of the gene cluster that mediates the biosynthesis of the mycotoxin meleagrin. The first stage is catalyzed by the dipeptide synthase roqA which condenses histidine and tryptophan to produce histidyltryptophanyldiketopiperazine (HTD). HTD is then converted to roquefortine C through two possible pathways. In the first pathway, prenyltransferase roqD transforms HTD to the intermediate roquefortine D, which is in turn converted to roquefortine C by the cytochrome P450 monooxygenase roqR. In the second pathway, HTD is first converted to the intermediate dehydrohistidyltryptophanyldi-ketopiperazine (DHTD) by roqR which is then prenylated by roqD to form roquefortine C. Roquefortine C can be further transformed to meleagrin via three more reactions including oxydation to glandicolin A by roqM, which is further reduced to glandicoline B by roqO. Finally, glandicoline B is converted to meleagrin by the glandicoline B O-methyltransferase roqN. More studies identified further branching and additional metabolites produced by the roquefortine/meleagrin cluster, including roquefortine F, roquefortine L, roquefortine M, roquefortine N and neoxaline. This is Glandicoline B O-methyltransferase roqN from Penicillium rubens (strain ATCC 28089 / DSM 1075 / NRRL 1951 / Wisconsin 54-1255) (Penicillium chrysogenum).